A 90-amino-acid polypeptide reads, in one-letter code: Putative Fis-like DNA-binding protein (90 aa).

Residues 66 to 85 (QSRAAALLGIHRATLRKKLK) constitute a DNA-binding region (H-T-H motif).

It belongs to the transcriptional regulatory Fis family.

The polypeptide is Putative Fis-like DNA-binding protein (Xylella fastidiosa (strain Temecula1 / ATCC 700964)).